Here is a 208-residue protein sequence, read N- to C-terminus: Putative ankyrin repeat protein Ta0196 (208 aa).

ANK repeat units lie at residues 49 to 78 (YQRN…HIDD), 82 to 111 (EGNT…SIDI), 115 to 144 (AGNT…NINI), and 148 to 177 (EGDT…DLNA).

The protein is Putative ankyrin repeat protein Ta0196 of Thermoplasma acidophilum (strain ATCC 25905 / DSM 1728 / JCM 9062 / NBRC 15155 / AMRC-C165).